The primary structure comprises 281 residues: ATP synthase subunit a (281 aa).

7 helical membrane passes run 56-76, 117-137, 144-164, 181-201, 215-235, 237-257, and 259-279; these read KPML…WAAF, LVVS…IPVA, IIAY…TLTF, KSLG…NILI, FAGH…LNGV, IAYA…ELFI, and ALQA…AMAE.

It belongs to the ATPase A chain family. In terms of assembly, F-type ATPases have 2 components, CF(1) - the catalytic core - and CF(0) - the membrane proton channel. CF(1) has five subunits: alpha(3), beta(3), gamma(1), delta(1), epsilon(1). CF(0) has three main subunits: a(1), b(2) and c(9-12). The alpha and beta chains form an alternating ring which encloses part of the gamma chain. CF(1) is attached to CF(0) by a central stalk formed by the gamma and epsilon chains, while a peripheral stalk is formed by the delta and b chains.

It is found in the cell membrane. In terms of biological role, key component of the proton channel; it plays a direct role in the translocation of protons across the membrane. This Streptomyces lividans protein is ATP synthase subunit a.